Here is a 1197-residue protein sequence, read N- to C-terminus: Sensor protein EvgS (1197 aa).

The first 21 residues, 1–21 (MKFLPYIFLLCCGLWSTISFA), serve as a signal peptide directing secretion. The Cytoplasmic segment spans residues 22–325 (DEDYIEYRGI…SMTDENGSVR (304 aa)). The chain crosses the membrane as a helical span at residues 326–346 (GVMGDILNIITLQTGLNFSPI). Topologically, residues 347-537 (TVSHNIHAGT…TWDLYSEQFY (191 aa)) are periplasmic. The helical transmembrane segment at 538-558 (IVTTLSVLLVGSSLLWGFYLL) threads the bilayer. The Cytoplasmic portion of the chain corresponds to 559–1197 (RSVRRRKVIQ…EIAVFCQKND (639 aa)). In terms of domain architecture, Histidine kinase spans 718-938 (TMSHEIRTPI…TFTITIPVEI (221 aa)). At His-721 the chain carries Phosphohistidine; by autocatalysis. One can recognise a Response regulatory domain in the interval 960-1074 (SILIADDHPT…VLKTHLSQLH (115 aa)). Asp-1009 carries the 4-aspartylphosphate modification. The HPt domain occupies 1098-1197 (DLQLMQEILM…EIAVFCQKND (100 aa)). His-1137 carries the phosphohistidine modification.

Activation requires a sequential transfer of a phosphate group from a His in the primary transmitter domain, to an Asp in the receiver domain and to a His in the secondary transmitter domain.

It localises to the cell inner membrane. It catalyses the reaction ATP + protein L-histidine = ADP + protein N-phospho-L-histidine.. Member of the two-component regulatory system EvgS/EvgA. Phosphorylates EvgA via a four-step phosphorelay in response to environmental signals. This Escherichia coli (strain K12) protein is Sensor protein EvgS (evgS).